Consider the following 497-residue polypeptide: Aluminum-activated malate transporter 10 (497 aa).

6 helical membrane passes run 66-86, 88-108, 123-143, 148-168, 173-193, and 210-230; these read KVVH…FYYM, PLYD…VVVF, VVAT…ATQS, VFVI…SRFV, ARFD…SVGG, and IAIG…IWAG. Disordered stretches follow at residues 413–437 and 476–497; these read PIET…ERTT and DFEQ…PLSS. Residues 417 to 436 are compositionally biased toward basic and acidic residues; that stretch reads NKPEEVPSEEENKVDSEERT. The segment covering 487 to 497 has biased composition (polar residues); it reads DNNTKQPPLSS.

It belongs to the aromatic acid exporter (TC 2.A.85) family.

Its subcellular location is the membrane. Functionally, malate transporter. This Arabidopsis thaliana (Mouse-ear cress) protein is Aluminum-activated malate transporter 10 (ALMT10).